Reading from the N-terminus, the 75-residue chain is Small ribosomal subunit protein bS18 (75 aa).

Belongs to the bacterial ribosomal protein bS18 family. Part of the 30S ribosomal subunit. Forms a tight heterodimer with protein bS6.

Binds as a heterodimer with protein bS6 to the central domain of the 16S rRNA, where it helps stabilize the platform of the 30S subunit. The sequence is that of Small ribosomal subunit protein bS18 from Teredinibacter turnerae (strain ATCC 39867 / T7901).